Consider the following 424-residue polypeptide: Histidine--tRNA ligase (424 aa).

Belongs to the class-II aminoacyl-tRNA synthetase family. As to quaternary structure, homodimer.

Its subcellular location is the cytoplasm. It catalyses the reaction tRNA(His) + L-histidine + ATP = L-histidyl-tRNA(His) + AMP + diphosphate + H(+). The sequence is that of Histidine--tRNA ligase from Shigella sonnei (strain Ss046).